The sequence spans 662 residues: Probable quinol oxidase subunit 1 (662 aa).

The next 2 membrane-spanning stretches (helical) occupy residues 14 to 34 (WMITMAQIGAPFLVIGLIAVI) and 58 to 78 (LMYLICAVLMFVRGGIDALLL). Residue histidine 102 coordinates Fe(II)-heme a. The next 8 helical transmembrane spans lie at 103–123 (GVIMIIFMAMPFVFGLWNVVV), 140–160 (ISFWLFFVGMILFNLSFIIGG), 187–207 (VAIQISGIGTLMTGINFFVTI), 228–248 (FITTLIVILAFPVFTVVLALM), 273–293 (FFWVWGHPEVYIVILPAFGIY), 311–331 (MVWATAGIAFLSFLVWVHHFF), 336–356 (GALINSFFSISTMLIGVPTGV), and 376–396 (MLFSLAFIPNFLLGGVTGVML). Histidine 279, tyrosine 283, histidine 328, and histidine 329 together coordinate Cu cation. Positions 279–283 (HPEVY) form a cross-link, 1'-histidyl-3'-tyrosine (His-Tyr). Residue histidine 414 participates in heme a3 binding. The next 5 helical transmembrane spans lie at 415-435 (FHYTLVTGVVFACLAGLIFWY), 451-471 (CFWLFMIGFNVCFLPQFILGL), 492-512 (VISTIGALLMAVGFLFLVVSI), 586-605 (THTGVIMGIFMLLGGFFLIF), and 609-628 (IPAAICLVGILGSLVYQSFV). Residue histidine 416 participates in Fe(II)-heme a binding.

It belongs to the heme-copper respiratory oxidase family. The cofactor is Cu cation. Requires ferriheme a as cofactor. Heme A3. is required as a cofactor.

It localises to the cell membrane. The enzyme catalyses 2 a quinol + O2 = 2 a quinone + 2 H2O. Its pathway is energy metabolism; oxidative phosphorylation. Catalyzes quinol oxidation with the concomitant reduction of oxygen to water. The protein is Probable quinol oxidase subunit 1 (qoxB) of Staphylococcus haemolyticus (strain JCSC1435).